We begin with the raw amino-acid sequence, 131 residues long: Arsenate reductase (131 aa).

Residues Cys10, Cys82, and Cys89 each act as nucleophile in the active site. 2 cysteine pairs are disulfide-bonded: Cys10–Cys82 and Cys82–Cys89.

It belongs to the low molecular weight phosphotyrosine protein phosphatase family. Thioredoxin-coupled ArsC subfamily.

The protein resides in the cytoplasm. It carries out the reaction arsenate + [thioredoxin]-dithiol + H(+) = arsenite + [thioredoxin]-disulfide + H2O. Functionally, catalyzes the reduction of arsenate [As(V)] to arsenite [As(III)]. This chain is Arsenate reductase, found in Staphylococcus xylosus.